The sequence spans 213 residues: Probable septum site-determining protein MinC (213 aa).

Belongs to the MinC family. Interacts with MinD and FtsZ.

In terms of biological role, cell division inhibitor that blocks the formation of polar Z ring septums. Rapidly oscillates between the poles of the cell to destabilize FtsZ filaments that have formed before they mature into polar Z rings. Prevents FtsZ polymerization. The polypeptide is Probable septum site-determining protein MinC (Pseudothermotoga lettingae (strain ATCC BAA-301 / DSM 14385 / NBRC 107922 / TMO) (Thermotoga lettingae)).